The chain runs to 130 residues: Small ribosomal subunit protein uS11 (130 aa).

This sequence belongs to the universal ribosomal protein uS11 family. Part of the 30S ribosomal subunit. Interacts with proteins S7 and S18. Binds to IF-3.

In terms of biological role, located on the platform of the 30S subunit, it bridges several disparate RNA helices of the 16S rRNA. Forms part of the Shine-Dalgarno cleft in the 70S ribosome. In Prochlorococcus marinus (strain NATL1A), this protein is Small ribosomal subunit protein uS11.